A 335-amino-acid polypeptide reads, in one-letter code: Probable cytosolic iron-sulfur protein assembly protein Ciao1 (335 aa).

WD repeat units follow at residues 12–51 (GHKGRIWGVAWHPKGNVFASCGEDKAIRIWSLTGNTWSTK), 57–96 (GHKRTIREIRWSPCGQYLASASFDATTAIWSKSSGEFECN), 101–140 (GHENEVKSVSWSRSGGLLATCSRDKSVWIWEVAGDDEFEC), 146–185 (PHTQDVKRVVWHPTKDILASASYDNTIKMFAEEPIDNDWD), 192–231 (SHTSTVWGIDFDADGERLVSCSDDTTIKIWRAYHPGNTAG), 250–289 (QHSRAIYDVSWCKLTGLIATACGDDGIRIFKESSDSKPDE), and 301–335 (AHDQDVNSVQWNPVVAGQLISCSDDGTIKIWKVTE).

This sequence belongs to the WD repeat CIA1 family. In terms of processing, conjugated to URM1, a ubiquitin-like protein.

Essential component of the cytosolic iron-sulfur (Fe/S) protein assembly machinery. Required for the maturation of extramitochondrial Fe/S proteins. The sequence is that of Probable cytosolic iron-sulfur protein assembly protein Ciao1 from Drosophila melanogaster (Fruit fly).